Consider the following 482-residue polypeptide: Membrane-bound lytic murein transglycosylase F (482 aa).

A signal peptide spans 1–18 (MKGLFLRIITALALLFWA). Residues 19–267 (IDMVFPWQFL…NLKEKYLGHI (249 aa)) are non-LT domain. The interval 268-482 (SQFDYVDTRS…NLEEIKENKD (215 aa)) is LT domain. Glu312 is an active-site residue. Over residues 457-470 (ENQTTNDNANNESA) the composition is skewed to polar residues. Positions 457–482 (ENQTTNDNANNESAVKNLEEIKENKD) are disordered. The segment covering 473 to 482 (NLEEIKENKD) has biased composition (basic and acidic residues).

The protein in the N-terminal section; belongs to the bacterial solute-binding protein 3 family. In the C-terminal section; belongs to the transglycosylase Slt family.

The protein localises to the cell outer membrane. It catalyses the reaction Exolytic cleavage of the (1-&gt;4)-beta-glycosidic linkage between N-acetylmuramic acid (MurNAc) and N-acetylglucosamine (GlcNAc) residues in peptidoglycan, from either the reducing or the non-reducing ends of the peptidoglycan chains, with concomitant formation of a 1,6-anhydrobond in the MurNAc residue.. Its function is as follows. Murein-degrading enzyme that degrades murein glycan strands and insoluble, high-molecular weight murein sacculi, with the concomitant formation of a 1,6-anhydromuramoyl product. Lytic transglycosylases (LTs) play an integral role in the metabolism of the peptidoglycan (PG) sacculus. Their lytic action creates space within the PG sacculus to allow for its expansion as well as for the insertion of various structures such as secretion systems and flagella. This chain is Membrane-bound lytic murein transglycosylase F, found in Haemophilus influenzae (strain 86-028NP).